The sequence spans 338 residues: Ketol-acid reductoisomerase (NADP(+)) (338 aa).

The KARI N-terminal Rossmann domain maps to 1-181 (MKVFYDKDAD…GGGRAGIIET (181 aa)). NADP(+) contacts are provided by residues 24–27 (YGSQ), Arg47, and Ser52. His107 is a catalytic residue. Residue Gly133 coordinates NADP(+). One can recognise a KARI C-terminal knotted domain in the interval 182-327 (NFREETETDL…EKLRAMMPWI (146 aa)). Mg(2+) contacts are provided by Asp190, Glu194, Glu226, and Glu230. Ser251 contributes to the substrate binding site.

The protein belongs to the ketol-acid reductoisomerase family. It depends on Mg(2+) as a cofactor.

The catalysed reaction is (2R)-2,3-dihydroxy-3-methylbutanoate + NADP(+) = (2S)-2-acetolactate + NADPH + H(+). The enzyme catalyses (2R,3R)-2,3-dihydroxy-3-methylpentanoate + NADP(+) = (S)-2-ethyl-2-hydroxy-3-oxobutanoate + NADPH + H(+). The protein operates within amino-acid biosynthesis; L-isoleucine biosynthesis; L-isoleucine from 2-oxobutanoate: step 2/4. It functions in the pathway amino-acid biosynthesis; L-valine biosynthesis; L-valine from pyruvate: step 2/4. Functionally, involved in the biosynthesis of branched-chain amino acids (BCAA). Catalyzes an alkyl-migration followed by a ketol-acid reduction of (S)-2-acetolactate (S2AL) to yield (R)-2,3-dihydroxy-isovalerate. In the isomerase reaction, S2AL is rearranged via a Mg-dependent methyl migration to produce 3-hydroxy-3-methyl-2-ketobutyrate (HMKB). In the reductase reaction, this 2-ketoacid undergoes a metal-dependent reduction by NADPH to yield (R)-2,3-dihydroxy-isovalerate. The chain is Ketol-acid reductoisomerase (NADP(+)) from Cupriavidus taiwanensis (strain DSM 17343 / BCRC 17206 / CCUG 44338 / CIP 107171 / LMG 19424 / R1) (Ralstonia taiwanensis (strain LMG 19424)).